Reading from the N-terminus, the 942-residue chain is Sucrose synthase 6 (942 aa).

The segment at 281 to 759 (TVFNVVIFSV…GLKRIYECYT (479 aa)) is GT-B glycosyltransferase. A disordered region spans residues 830-862 (TTNLGAGSKQKEVTETEKTKQKSKDGQEQHDVK). Basic and acidic residues predominate over residues 838–862 (KQKEVTETEKTKQKSKDGQEQHDVK).

It belongs to the glycosyltransferase 1 family. Plant sucrose synthase subfamily. In terms of tissue distribution, detected in the whole plant but more precisely confined to the vasculature in cotyledons, leaves, petals, anthers and roots.

Its subcellular location is the secreted. The protein resides in the cell wall. It catalyses the reaction an NDP-alpha-D-glucose + D-fructose = a ribonucleoside 5'-diphosphate + sucrose + H(+). In terms of biological role, sucrose-cleaving enzyme that provides UDP-glucose and fructose for various metabolic pathways. Functions in callose synthesis at the site of phloem sieve elements. This Arabidopsis thaliana (Mouse-ear cress) protein is Sucrose synthase 6 (SUS6).